The chain runs to 237 residues: MQKLAELYRGKAKTVYTTENPDLLVLEFRNDTSALDGQRIEQFDRKGMVNNKFNHFIMSKLEEAGIPTQMERLLSDNEVLVKKLDMVPVECVIRNRAAGSLVKRLGIEEGLVLNPPLFDLFLKNDEMHDPMVNESYCETFGWVNKQHLARMRELSYQANDVLSKLFDDAGLILVDFKLEFGLFNGEVVLGDEFSPDGSRLWDKNTLDKMDKDRFRQSLGGLIEAYEEVARRIGVKLD.

Belongs to the SAICAR synthetase family.

It catalyses the reaction 5-amino-1-(5-phospho-D-ribosyl)imidazole-4-carboxylate + L-aspartate + ATP = (2S)-2-[5-amino-1-(5-phospho-beta-D-ribosyl)imidazole-4-carboxamido]succinate + ADP + phosphate + 2 H(+). It functions in the pathway purine metabolism; IMP biosynthesis via de novo pathway; 5-amino-1-(5-phospho-D-ribosyl)imidazole-4-carboxamide from 5-amino-1-(5-phospho-D-ribosyl)imidazole-4-carboxylate: step 1/2. The polypeptide is Phosphoribosylaminoimidazole-succinocarboxamide synthase (Serratia proteamaculans (strain 568)).